Consider the following 152-residue polypeptide: D-aminoacyl-tRNA deacylase 1 (152 aa).

The short motif at 140-141 (GP) is the Gly-cisPro motif, important for rejection of L-amino acids element.

It belongs to the DTD family. As to quaternary structure, homodimer.

Its subcellular location is the cytoplasm. It catalyses the reaction glycyl-tRNA(Ala) + H2O = tRNA(Ala) + glycine + H(+). The enzyme catalyses a D-aminoacyl-tRNA + H2O = a tRNA + a D-alpha-amino acid + H(+). An aminoacyl-tRNA editing enzyme that deacylates mischarged D-aminoacyl-tRNAs. Hydrolyzes correctly charged, achiral, glycyl-tRNA(Gly). Deacylates mischarged D.melanogaster and E.coli glycyl-tRNA(Ala), protecting cells against glycine mischarging by AlaRS. Acts via tRNA-based rather than protein-based catalysis; rejects L-amino acids rather than detecting D-amino acids in the active site. By recycling D-aminoacyl-tRNA to D-amino acids and free tRNA molecules, this enzyme counteracts the toxicity associated with the formation of D-aminoacyl-tRNA entities in vivo and helps enforce protein L-homochirality. The chain is D-aminoacyl-tRNA deacylase 1 (dtd1) from Leishmania major.